Here is an 841-residue protein sequence, read N- to C-terminus: DNA ligase (841 aa).

NAD(+) contacts are provided by residues 33–37 (DAQYD), 82–83 (SL), and Glu-114. Lys-116 acts as the N6-AMP-lysine intermediate in catalysis. Residues Arg-137, Glu-174, Lys-300, and Lys-324 each contribute to the NAD(+) site. Zn(2+) contacts are provided by Cys-418, Cys-421, Cys-436, and Cys-442. The region spanning 758–841 (EKTGPLDGQT…AFLGEHGQQR (84 aa)) is the BRCT domain.

Belongs to the NAD-dependent DNA ligase family. LigA subfamily. Mg(2+) is required as a cofactor. The cofactor is Mn(2+).

The enzyme catalyses NAD(+) + (deoxyribonucleotide)n-3'-hydroxyl + 5'-phospho-(deoxyribonucleotide)m = (deoxyribonucleotide)n+m + AMP + beta-nicotinamide D-nucleotide.. Its function is as follows. DNA ligase that catalyzes the formation of phosphodiester linkages between 5'-phosphoryl and 3'-hydroxyl groups in double-stranded DNA using NAD as a coenzyme and as the energy source for the reaction. It is essential for DNA replication and repair of damaged DNA. The polypeptide is DNA ligase (Xanthomonas oryzae pv. oryzae (strain KACC10331 / KXO85)).